Here is a 67-residue protein sequence, read N- to C-terminus: Photosystem II reaction center protein H (67 aa).

Residues 27–47 (GAVPVMAFIGVLLLVFLVILL) traverse the membrane as a helical segment.

Belongs to the PsbH family. In terms of assembly, PSII is composed of 1 copy each of membrane proteins PsbA, PsbB, PsbC, PsbD, PsbE, PsbF, PsbH, PsbI, PsbJ, PsbK, PsbL, PsbM, PsbT, PsbX, PsbY, Psb30/Ycf12, peripheral proteins PsbO, CyanoQ (PsbQ), PsbU, PsbV and a large number of cofactors. It forms dimeric complexes.

The protein resides in the cellular thylakoid membrane. Functionally, one of the components of the core complex of photosystem II (PSII), required for its stability and/or assembly. PSII is a light-driven water:plastoquinone oxidoreductase that uses light energy to abstract electrons from H(2)O, generating O(2) and a proton gradient subsequently used for ATP formation. It consists of a core antenna complex that captures photons, and an electron transfer chain that converts photonic excitation into a charge separation. The polypeptide is Photosystem II reaction center protein H (Prochlorococcus marinus (strain MIT 9211)).